Reading from the N-terminus, the 577-residue chain is MNIIDIIPVARGKQPADLLLKNARIVNVFSGEIERANIAIFRKRIAGIGDYSEGKQVIDLHGAYVVPGLIDAHLHIESSMVSPVEFAKTVLPRGTTTVIADPHEIANVLGLDGVEYLIKSTEGVPLNLYIMLPSSVPATNLENNGARISVMDMIGFVEKHPRVLGLGEVMNYPDIINGDHDSIAKIELLRHKYKKIDGHIPGISGKDLNAYICAFIRSDHECTNVEEAKEKLARGMQILVREGSVARNLDELLPLINEKNYPFISFCTDDKHPNDILNEGHIDYMIRYAIKKGIDPITAVRAATINTARHYNLRSMGAIAPGYKADFVIVDNLEEFRISMVFKDSKLIAENGKLVIDINREQFPLEEVNTFKCPHIEEKDLEVLNKGENIRVIRVYGDDVLTKELRMEPKTKDGRIVSDVNRDILKVASICRYCEEKSMAIGFINGTGLKQGAVATSVGHDAHNMSVIGTNDADMVVAANRVIDMGGGLVIANSGKVLAELPLPIAGLMSNLSSKEVAERLGHLKTVLKELGCEVPDLFMTLSFVQLSVIPELRITNQGLVDVINNNFVSLFIGKEG.

The protein belongs to the metallo-dependent hydrolases superfamily. Adenine deaminase family. The cofactor is Mn(2+).

It catalyses the reaction adenine + H2O + H(+) = hypoxanthine + NH4(+). This chain is Adenine deaminase, found in Kosmotoga olearia (strain ATCC BAA-1733 / DSM 21960 / TBF 19.5.1).